The following is a 177-amino-acid chain: Probable inosine/xanthosine triphosphatase (177 aa).

It belongs to the YjjX NTPase family. In terms of assembly, homodimer. It depends on Mg(2+) as a cofactor. Requires Mn(2+) as cofactor.

The catalysed reaction is XTP + H2O = XDP + phosphate + H(+). It carries out the reaction ITP + H2O = IDP + phosphate + H(+). Phosphatase that hydrolyzes non-canonical purine nucleotides such as XTP and ITP to their respective diphosphate derivatives. Probably excludes non-canonical purines from DNA/RNA precursor pool, thus preventing their incorporation into DNA/RNA and avoiding chromosomal lesions. The chain is Probable inosine/xanthosine triphosphatase from Halalkalibacterium halodurans (strain ATCC BAA-125 / DSM 18197 / FERM 7344 / JCM 9153 / C-125) (Bacillus halodurans).